The sequence spans 150 residues: Protein SprT-like (150 aa).

The 139-residue stretch at 11–149 folds into the SprT-like domain; the sequence is ELVDKLSLTY…CGKCRGSLKE (139 aa). H70 contributes to the Zn(2+) binding site. The active site involves E71. H74 contacts Zn(2+).

This sequence belongs to the SprT family. Requires Zn(2+) as cofactor.

The protein localises to the cytoplasm. The sequence is that of Protein SprT-like from Oceanobacillus iheyensis (strain DSM 14371 / CIP 107618 / JCM 11309 / KCTC 3954 / HTE831).